The sequence spans 184 residues: ATP synthase subunit b, chloroplastic (184 aa).

The chain crosses the membrane as a helical span at residues 27-49; the sequence is LATNPINLSVVFGVLIFFGKGVL.

It belongs to the ATPase B chain family. As to quaternary structure, F-type ATPases have 2 components, F(1) - the catalytic core - and F(0) - the membrane proton channel. F(1) has five subunits: alpha(3), beta(3), gamma(1), delta(1), epsilon(1). F(0) has four main subunits: a(1), b(1), b'(1) and c(10-14). The alpha and beta chains form an alternating ring which encloses part of the gamma chain. F(1) is attached to F(0) by a central stalk formed by the gamma and epsilon chains, while a peripheral stalk is formed by the delta, b and b' chains.

The protein localises to the plastid. Its subcellular location is the chloroplast thylakoid membrane. In terms of biological role, f(1)F(0) ATP synthase produces ATP from ADP in the presence of a proton or sodium gradient. F-type ATPases consist of two structural domains, F(1) containing the extramembraneous catalytic core and F(0) containing the membrane proton channel, linked together by a central stalk and a peripheral stalk. During catalysis, ATP synthesis in the catalytic domain of F(1) is coupled via a rotary mechanism of the central stalk subunits to proton translocation. Functionally, component of the F(0) channel, it forms part of the peripheral stalk, linking F(1) to F(0). This is ATP synthase subunit b, chloroplastic from Crucihimalaya wallichii (Rock-cress).